The sequence spans 922 residues: Histidine kinase 5 (922 aa).

Coiled-coil stretches lie at residues 86 to 120 (MQDNAVRLLKEELKNLDRQREEAEAKELKIIEEYK) and 169 to 205 (KQKALSLEKMLEASTERERRLMEKLSESLKTMESQSA). The 242-residue stretch at 373–614 (TMSHEIRSPL…TFTFILPYKV (242 aa)) folds into the Histidine kinase domain. Phosphohistidine; by autocatalysis is present on H376. 2 disordered regions span residues 620-639 (YSDDQDEFSDMADQQSEPDD) and 728-773 (NGRC…TEVK). The segment covering 738-747 (SCSSSQASSE) has biased composition (low complexity). A compositionally biased stretch (basic and acidic residues) spans 761 to 773 (SHREEEKAETEVK). The 143-residue stretch at 779–921 (KILLVEDNKI…KLRECLQQYL (143 aa)) folds into the Response regulatory domain. 3 residues coordinate Mg(2+): D785, D828, and C830. D828 carries the 4-aspartylphosphate modification.

Interacts with AHP1, APH2, APH3, APH5 and APH6, but not with APH4. Present in light-grown but not in etiolated seedlings. Mostly expressed in roots flowers and siliques, and, to a lower extent, in stems and leaves, especially in guard cells.

The protein localises to the cell membrane. It is found in the cytoplasm. The enzyme catalyses ATP + protein L-histidine = ADP + protein N-phospho-L-histidine.. In terms of biological role, functions as a histidine kinase and transmits the stress signal to a downstream MAPK cascade. This protein undergoes an ATP-dependent autophosphorylation at a conserved histidine residue in the kinase core, and a phosphoryl group is then transferred to a conserved aspartate residue in the receiver domain. Negative regulator of the ETR1-dependent abscisic acid (ABA) and ethylene signaling pathway that inhibits the root elongation. Promotes stomatal closure. Regulates stomatal opening by integrating multiple signals via hydrogen peroxide H(2)O(2) homeostasis in guard cells in an ABA-independent manner. May contribute to basal defense mechanisms by closing stomata in the presence of bacterial pathogens. Regulates both hormone levels and ROS production in response to stress. Required for full immunity to bacterial pathogen and necrotrophic fungus. In Arabidopsis thaliana (Mouse-ear cress), this protein is Histidine kinase 5 (AHK5).